Here is a 397-residue protein sequence, read N- to C-terminus: Protein Rep52 (397 aa).

Residues 84–239 enclose the SF3 helicase domain; sequence DPQYAASVFL…LDHDFGKVTK (156 aa). ATP is bound at residue 110-117; sequence GPATTGKT. Positions 265–296 are disordered; that stretch reads GGAKKRPAPSDADISEPKRVRESVAQPSTSDA.

In terms of assembly, homooligomer. Interacts with host PRKX.

It is found in the host nucleus. Functionally, plays a critical role during packaging of viral DNA into empty capsids, where they are thought to be part of the packaging motor complex. The single stranded genomic DNA is packaged in a 3' to 5' direction and requires the association between viral DNA and Rep40. Regulates host PKA activity by interacting with host PRKX as a mechanism to interfere with helper virus propagation and to promote its own replication. This is Protein Rep52 (Rep52) from Mammalia (AAV-2).